The sequence spans 692 residues: Elongation factor G (692 aa).

Positions Glu-8–Leu-282 constitute a tr-type G domain. GTP is bound by residues Ala-17–Thr-24, Asp-81–His-85, and Asn-135–Asp-138.

This sequence belongs to the TRAFAC class translation factor GTPase superfamily. Classic translation factor GTPase family. EF-G/EF-2 subfamily.

The protein resides in the cytoplasm. Functionally, catalyzes the GTP-dependent ribosomal translocation step during translation elongation. During this step, the ribosome changes from the pre-translocational (PRE) to the post-translocational (POST) state as the newly formed A-site-bound peptidyl-tRNA and P-site-bound deacylated tRNA move to the P and E sites, respectively. Catalyzes the coordinated movement of the two tRNA molecules, the mRNA and conformational changes in the ribosome. This chain is Elongation factor G, found in Bacillus cytotoxicus (strain DSM 22905 / CIP 110041 / 391-98 / NVH 391-98).